A 152-amino-acid chain; its full sequence is UPF0266 membrane protein YobD (152 aa).

The next 3 membrane-spanning stretches (helical) occupy residues 6 to 26, 45 to 65, and 67 to 87; these read LVLILFIAALLAYALYDQFIM, VDSVIFVGLVAILIYNNVTSH, and AQMTTWLLSALALMGFYIFWI.

Belongs to the UPF0266 family.

The protein localises to the cell inner membrane. This chain is UPF0266 membrane protein YobD, found in Salmonella enteritidis PT4 (strain P125109).